A 314-amino-acid chain; its full sequence is Putative 4-hydroxy-2-oxoglutarate aldolase, mitochondrial (314 aa).

Substrate is bound at residue 50 to 51 (TN). The active-site Schiff-base intermediate with substrate is the K171.

The protein belongs to the DapA family.

It catalyses the reaction (4S)-4-hydroxy-2-oxoglutarate = glyoxylate + pyruvate. The enzyme catalyses (4R)-4-hydroxy-2-oxoglutarate = glyoxylate + pyruvate. In terms of biological role, may catalyze the final step in the metabolic pathway of hydroxyproline. This Coccidioides immitis (strain RS) (Valley fever fungus) protein is Putative 4-hydroxy-2-oxoglutarate aldolase, mitochondrial.